The chain runs to 384 residues: DNA polymerase IV (384 aa).

The UmuC domain occupies 5-182 (IIHVDMDAFF…LPVTKVHGIG (178 aa)). Mg(2+) contacts are provided by Asp-9, Met-10, and Asp-103. Glu-104 is an active-site residue.

Belongs to the DNA polymerase type-Y family. Monomer. The cofactor is Mg(2+).

Its subcellular location is the cytoplasm. It catalyses the reaction DNA(n) + a 2'-deoxyribonucleoside 5'-triphosphate = DNA(n+1) + diphosphate. Its function is as follows. Poorly processive, error-prone DNA polymerase involved in translesion repair and untargeted mutagenesis. Copies undamaged DNA at stalled replication forks, which arise in vivo from mismatched or misaligned primer ends. These misaligned primers can be extended by PolIV. Exhibits no 3'-5' exonuclease (proofreading) activity. Involved in translesional synthesis. Primer extension fidelity in vitro is temperature-dependent. Inserts a correct base opposite templating bases at 70 degrees Celsius, but at 37 degrees Celsius in addition to correct base pairing, base transitions, transversions and frameshifts can occur. Preferably forms erroneous base pairs C:T. Bypasses 8-oxo-dG oxidative damage by incorporating dATP or dCTP opposite of the damaged DNA template site at both temperatures in vitro. The protein is DNA polymerase IV of Caldanaerobacter subterraneus subsp. tengcongensis (strain DSM 15242 / JCM 11007 / NBRC 100824 / MB4) (Thermoanaerobacter tengcongensis).